Reading from the N-terminus, the 102-residue chain is MFVKTGDKVRVIAGKDKGKEGTITKTVAGKDRVVVEGVNIVKKHQKPSNEYPQGGVIDIEAPIHVSNVQLLDPSTNEPTRVGFKVEDGKKIRVSKKSGNVLG.

Belongs to the universal ribosomal protein uL24 family. In terms of assembly, part of the 50S ribosomal subunit.

In terms of biological role, one of two assembly initiator proteins, it binds directly to the 5'-end of the 23S rRNA, where it nucleates assembly of the 50S subunit. Functionally, one of the proteins that surrounds the polypeptide exit tunnel on the outside of the subunit. The protein is Large ribosomal subunit protein uL24 of Leuconostoc mesenteroides subsp. mesenteroides (strain ATCC 8293 / DSM 20343 / BCRC 11652 / CCM 1803 / JCM 6124 / NCDO 523 / NBRC 100496 / NCIMB 8023 / NCTC 12954 / NRRL B-1118 / 37Y).